The primary structure comprises 373 residues: Putative citrate synthase 2 (373 aa).

Catalysis depends on residues His-250 and Glu-303.

The protein belongs to the citrate synthase family.

The enzyme catalyses oxaloacetate + acetyl-CoA + H2O = citrate + CoA + H(+). It functions in the pathway carbohydrate metabolism; tricarboxylic acid cycle; isocitrate from oxaloacetate: step 1/2. This chain is Putative citrate synthase 2 (citA), found in Mycobacterium bovis (strain ATCC BAA-935 / AF2122/97).